The primary structure comprises 303 residues: tRNA dimethylallyltransferase (303 aa).

Residue glycine 10–serine 17 coordinates ATP. A substrate-binding site is contributed by threonine 12–serine 17. The segment at aspartate 35 to glutamine 38 is interaction with substrate tRNA.

This sequence belongs to the IPP transferase family. In terms of assembly, monomer. Mg(2+) serves as cofactor.

The catalysed reaction is adenosine(37) in tRNA + dimethylallyl diphosphate = N(6)-dimethylallyladenosine(37) in tRNA + diphosphate. Its function is as follows. Catalyzes the transfer of a dimethylallyl group onto the adenine at position 37 in tRNAs that read codons beginning with uridine, leading to the formation of N6-(dimethylallyl)adenosine (i(6)A). This chain is tRNA dimethylallyltransferase, found in Methylobacterium nodulans (strain LMG 21967 / CNCM I-2342 / ORS 2060).